The following is a 170-amino-acid chain: Glycine cleavage system H protein, mitochondrial (170 aa).

The transit peptide at Met1–Leu45 directs the protein to the mitochondrion. Residues Ile63–Thr145 enclose the Lipoyl-binding domain. Lys104 bears the N6-lipoyllysine mark.

The protein belongs to the GcvH family. As to quaternary structure, the glycine cleavage system is composed of four proteins: P (GLDC), T (GCST), L (DLD) and H (GCSH). Interacts with GLDC. Requires (R)-lipoate as cofactor.

The protein resides in the mitochondrion. The glycine cleavage system catalyzes the degradation of glycine. The H protein (GCSH) shuttles the methylamine group of glycine from the P protein (GLDC) to the T protein (GCST). Has a pivotal role in the lipoylation of enzymes involved in cellular energetics such as the mitochondrial dihydrolipoyllysine-residue acetyltransferase component of pyruvate dehydrogenase complex (DLAT), and the mitochondrial dihydrolipoyllysine-residue succinyltransferase component of 2-oxoglutarate dehydrogenase complex (DLST). This chain is Glycine cleavage system H protein, mitochondrial, found in Rattus norvegicus (Rat).